Consider the following 207-residue polypeptide: MMHQIYSCSDENIEVFTTVIPSKVSSPARRRAKSSQHLLTKNVVIESDLYTHQPLELLPHRGDRRDPGDGRRFGRLQTARPPTAHPAKASARPVGISEPKTSNLCGNRAYGKSLIPPVPRISVKTSASASLEATAMGTEKGAVLMRGSRHLKKMTEEYPALPQGAEASLPLTGSASCGVPGILRKMWTRHKKKSEYVGATNSAFEAD.

The disordered stretch occupies residues 55-102; that stretch reads LELLPHRGDRRDPGDGRRFGRLQTARPPTAHPAKASARPVGISEPKTS. A compositionally biased stretch (basic and acidic residues) spans 58–72; it reads LPHRGDRRDPGDGRR.

The protein belongs to the vexin family.

The protein resides in the cell membrane. The protein localises to the nucleus. Functionally, required for neurogenesis in the neural plate and retina. Strongly cooperates with neural bHLH factors to promote neurogenesis. In Pongo abelii (Sumatran orangutan), this protein is Vexin.